The following is a 2055-amino-acid chain: MLKFKYGVRNPSEASAPEPIASRASRLNLFFQGKPPLMTQQQMSALSREGVLDALFVLLEECSQPALMKIKHVSSFVRKYSDTIAELRELQPSVRDFEVRSLVGCGHFAEVQVVREKATGDVYAMKIMKKAALRAQEQVSFFEEERNILSQSTSPWIPQLQYAFQDKNNLYLVMEYQPGGDLLSLLNRYEDQLDENMIQFYLAELILAVHSVHQMGYVHRDIKPENILIDRTGHIKLVDFGSAAKMNSNKVDAKLPIGTPDYMAPEVLTVMNEDRRGTYGLDCDWWSVGVVAYEMLYGKTPFTEGTSARTFNNIMNFQRFLKFPDDPKVSSELLDLIQSLLCVQKERLKFEGLCCHPFFARTDWNNIRNSPPPFVPTLKSDDDTSNFDEPEKNSWVSSSPCQLSPSGFSGEELPFVGFSYSKALGYLGRSESVVSGLDSPAKISSMEKKLLIKSKELQDSQDKCHKMEQEMARLHRRVSEVEAVLSQKEVELKASETQRSLLEQDLATYITECSSLKRSLEQARMEVSQEDDKALQLLHDIREQSRKLQEIKEQEYQAQVEEMRLMMNQLEEDLVSARRRSDLYESELRESRLAAEEFKRKANECQHKLMKAKDLGKPEVGECSRLEKINAEQQLKIQELQEKLEKAVKASTEATELLQNIRQAKERAERELEKLHNREDSSEGIKKKLVEAEERRHSLENKVKRLETMERRENRLKDDIQTKSEQIQQMADKILELEEKHREAQVSAQHLEVHLKQKEQHYEEKIKVLDNQIKKDLADKESLETMMQRHEEEAHEKGKILSEQKAMINAMDSKIRSLEQRIVELSEANKLAANSSLFTQRNMKAQEEMISELRQQKFYLETQAGKLEAQNRKLEEQLEKISHQDHSDKNRLLELETRLREVSLEHEEQKLELKRQLTELQLSLQERESQLTALQAARAALESQLRQAKTELEETTAEAEEEIQALTAHRDEIQRKFDALRNSCTVITDLEEQLNQLTEDNAELNNQNFYLSKQLDEASGANDEIVQLRSEVDHLRREITEREMQLTSQKQTMEALKTTCTMLEEQVMDLEALNDELLEKERQWEAWRSVLGDEKSQFECRVRELQRMLDTEKQSRARADQRITESRQVVELAVKEHKAEILALQQALKEQKLKAESLSDKLNDLEKKHAMLEMNARSLQQKLETERELKQRLLEEQAKLQQQMDLQKNHIFRLTQGLQEALDRADLLKTERSDLEYQLENIQVLYSHEKVKMEGTISQQTKLIDFLQAKMDQPAKKKKVPLQYNELKLALEKEKARCAELEEALQKTRIELRSAREEAAHRKATDHPHPSTPATARQQIAMSAIVRSPEHQPSAMSLLAPPSSRRKEASTPEEFSRRLKERMHHNIPHRFNVGLNMRATKCAVCLDTVHFGRQASKCLECQVMCHPKCSTCLPATCGLPAEYATHFTEAFCRDKVSSPGLQSKEPSSSLHLEGWMKVPRNNKRGQQGWDRKYIVLEGSKVLIYDNEAREAGQRPVEEFELCLPDGDVSIHGAVGASELANTAKADVPYILKMESHPHTTCWPGRTLYLLAPSFPDKQRWVTALESVVAGGRVSREKAEADAKLLGNSLLKLEGDDRLDMNCTLPFSDQVVLVGTEEGLYALNVLKNSLTHIPGIGAVFQIYIIKDLEKLLMIAGEERALCLVDVKKVKQSLAQSHLPAQPDVSPNIFEAVKGCHLFAAGKIENSLCICAAMPSKVVILRYNDNLSKFCIRKEIETSEPCSCIHFTNYSILIGTNKFYEIDMKQYTLEEFLDKNDHSLAPAVFASSTNSFPVSIVQANSTGQREEYLLCFHEFGVFVDSYGRRSRTDDLKWSRLPLAFAYREPYLFVTHFNSLEVIEIQARSSLGTPARAYLEIPNPRYLGPAISSGAIYLASSYQDKLRVICCKGNLVKESGTEQHRVPSTSRSSPNKRGPPTYNEHITKRVASSPAPPEGPSHPREPSTPHRYRDREGRTELRRDKSPGRPLEREKSPGRMLSTRRERSPGRLFEDSSRGRLPAGAVRTPLSQVNKVWDQSSV.

The 263-residue stretch at 97-359 folds into the Protein kinase domain; it reads FEVRSLVGCG…FEGLCCHPFF (263 aa). Residues 103–111 and Lys-126 contribute to the ATP site; that span reads VGCGHFAEV. Residue Asp-221 is the Proton acceptor of the active site. The AGC-kinase C-terminal domain occupies 360–430; the sequence is ARTDWNNIRN…SKALGYLGRS (71 aa). Residues 375–398 are disordered; sequence VPTLKSDDDTSNFDEPEKNSWVSS. Coiled-coil stretches lie at residues 457–747, 773–1238, and 1284–1318; these read LQDS…AQVS, IKKD…LEYQ, and YNEL…AREE. The tract at residues 1349–1376 is disordered; it reads PEHQPSAMSLLAPPSSRRKEASTPEEFS. Residues 1353–1363 are compositionally biased toward low complexity; it reads PSAMSLLAPPS. A compositionally biased stretch (basic and acidic residues) spans 1365–1376; it reads RRKEASTPEEFS. Residues 1388 to 1437 form a Phorbol-ester/DAG-type zinc finger; it reads PHRFNVGLNMRATKCAVCLDTVHFGRQASKCLECQVMCHPKCSTCLPATC. One can recognise a PH domain in the interval 1469-1589; it reads SLHLEGWMKV…WVTALESVVA (121 aa). The 291-residue stretch at 1617-1907 folds into the CNH domain; it reads RLDMNCTLPF…RYLGPAISSG (291 aa). Positions 1932–2040 are disordered; it reads SGTEQHRVPS…RGRLPAGAVR (109 aa). Residues 1939–1948 are compositionally biased toward polar residues; sequence VPSTSRSSPN. Positions 1974–2031 are enriched in basic and acidic residues; sequence SHPREPSTPHRYRDREGRTELRRDKSPGRPLEREKSPGRMLSTRRERSPGRLFEDSSR.

Belongs to the protein kinase superfamily. AGC Ser/Thr protein kinase family. In terms of assembly, homodimer. Directly interacts with KIF14 depending on the activation state (stronger interaction with the kinase-dead form). Interacts with TTC3.

Its subcellular location is the cytoplasm. The enzyme catalyses L-seryl-[protein] + ATP = O-phospho-L-seryl-[protein] + ADP + H(+). The catalysed reaction is L-threonyl-[protein] + ATP = O-phospho-L-threonyl-[protein] + ADP + H(+). Functionally, plays a role in cytokinesis. Required for KIF14 localization to the central spindle and midbody. Putative RHO/RAC effector that binds to the GTP-bound forms of RHO and RAC1. It probably binds p21 with a tighter specificity in vivo. Displays serine/threonine protein kinase activity. Plays an important role in the regulation of cytokinesis and the development of the central nervous system. Phosphorylates MYL9/MLC2. This chain is Citron rho-interacting kinase, found in Rattus norvegicus (Rat).